The primary structure comprises 343 residues: Leucine-rich repeat-containing protein 23 (343 aa).

Positions Met1–Glu30 are enriched in acidic residues. A disordered region spans residues Met1–Pro47. LRR repeat units lie at residues His92–Thr113, His114–Pro134, Tyr135–Pro155, Arg156–Lys177, Ser180–Pro200, Lys201–Ser222, Asn223–Met244, and Ser246–Arg267. Positions Ala208 to Ile343 are interaction with RSPH9. Residues Asn280–Ile318 form the LRRCT domain. Positions Tyr307–Glu329 form a coiled coil. Residues Ile318 to Glu337 show a composition bias toward basic and acidic residues. The interval Ile318–Ile343 is disordered.

As to quaternary structure, component of the axonemal radial spoke complex. Interacts with RSPH3. Interacts with RSPH9. Expressed in spermatozoa.

The protein localises to the cell projection. It is found in the cilium. The protein resides in the flagellum. Its subcellular location is the cytoplasm. It localises to the cytoskeleton. The protein localises to the flagellum axoneme. In terms of biological role, essential for sperm motility and male fertility. Plays an important role in the proper assembly of the third radial spoke (RS3) head and the bridge structure between RS2 and RS3 in the sperm flagella. In Homo sapiens (Human), this protein is Leucine-rich repeat-containing protein 23 (LRRC23).